The following is a 504-amino-acid chain: MYIPNLRNYHDKVFPYGPSSNGYNPVIRLTDRTTQPDPSQHIYQEEKISKCEGLSYRAREWLLLSSNSNARVAIALAEPVLYLPGATSSEIQSEHSAVLRGSLCIQIYKPVKLKKIQLSFKGKSRTEWPEGIPPKLFDTYEENSIMNHCWVFFHSEQKVDENSHGAVWYKVLPHYADTAHYPRSMECFYPGEYVYNFELPISCTYPESIQTDMGRVYYFLETLVDRSSTFSGKSTGRIPIELIRSPCSTSVATSEPILVSKSWEDRLHYEVQVGEKCVVMGQVVPVNFKFTLLGEVKFHKLRLFLMERRYYYCRQRSVRRKEKTRQLLLYERSAPKNQCLLSDWKQVRPDVYELSDQVRIPGCHDMAANIVHFDTTYPNIKITHTVRTVLRFSCENSPELMGSAKYLEIYIDSPVRLLSCRCSDGSTMLPAYCPIIPSSEVNFCSIDNRIIAGMNRDLALDSDIIGNSPPSFDSWTAVPYQAPPPKYDDIFQSGSSHDENHDDN.

Residues 481–504 form a disordered region; that stretch reads QAPPPKYDDIFQSGSSHDENHDDN.

It belongs to the ALY1 family.

May regulate endocytosis in response to extracellular stimuli. The sequence is that of Putative arrestin-related trafficking adapter SPBC839.02 from Schizosaccharomyces pombe (strain 972 / ATCC 24843) (Fission yeast).